A 259-amino-acid polypeptide reads, in one-letter code: Thiazole synthase (259 aa).

The active-site Schiff-base intermediate with DXP is the K99. Residues G161, 187-188, and 209-210 contribute to the 1-deoxy-D-xylulose 5-phosphate site; these read AG and NT.

It belongs to the ThiG family. In terms of assembly, homotetramer. Forms heterodimers with either ThiH or ThiS.

The protein localises to the cytoplasm. The enzyme catalyses [ThiS sulfur-carrier protein]-C-terminal-Gly-aminoethanethioate + 2-iminoacetate + 1-deoxy-D-xylulose 5-phosphate = [ThiS sulfur-carrier protein]-C-terminal Gly-Gly + 2-[(2R,5Z)-2-carboxy-4-methylthiazol-5(2H)-ylidene]ethyl phosphate + 2 H2O + H(+). The protein operates within cofactor biosynthesis; thiamine diphosphate biosynthesis. Its function is as follows. Catalyzes the rearrangement of 1-deoxy-D-xylulose 5-phosphate (DXP) to produce the thiazole phosphate moiety of thiamine. Sulfur is provided by the thiocarboxylate moiety of the carrier protein ThiS. In vitro, sulfur can be provided by H(2)S. This chain is Thiazole synthase, found in Nitratiruptor sp. (strain SB155-2).